We begin with the raw amino-acid sequence, 260 residues long: Acyl-[acyl-carrier-protein]--UDP-N-acetylglucosamine O-acyltransferase (260 aa).

This sequence belongs to the transferase hexapeptide repeat family. LpxA subfamily. Homotrimer.

It localises to the cytoplasm. It catalyses the reaction a (3R)-hydroxyacyl-[ACP] + UDP-N-acetyl-alpha-D-glucosamine = a UDP-3-O-[(3R)-3-hydroxyacyl]-N-acetyl-alpha-D-glucosamine + holo-[ACP]. It functions in the pathway glycolipid biosynthesis; lipid IV(A) biosynthesis; lipid IV(A) from (3R)-3-hydroxytetradecanoyl-[acyl-carrier-protein] and UDP-N-acetyl-alpha-D-glucosamine: step 1/6. Functionally, involved in the biosynthesis of lipid A, a phosphorylated glycolipid that anchors the lipopolysaccharide to the outer membrane of the cell. This Aliarcobacter butzleri (strain RM4018) (Arcobacter butzleri) protein is Acyl-[acyl-carrier-protein]--UDP-N-acetylglucosamine O-acyltransferase.